We begin with the raw amino-acid sequence, 138 residues long: Cysteine desulfuration protein SufE (138 aa).

Cysteine 51 functions as the Cysteine persulfide intermediate in the catalytic mechanism.

It belongs to the SufE family. In terms of assembly, homodimer. Interacts with SufS.

It is found in the cytoplasm. It participates in cofactor biosynthesis; iron-sulfur cluster biosynthesis. In terms of biological role, participates in cysteine desulfuration mediated by SufS. Cysteine desulfuration mobilizes sulfur from L-cysteine to yield L-alanine and constitutes an essential step in sulfur metabolism for biosynthesis of a variety of sulfur-containing biomolecules. Functions as a sulfur acceptor for SufS, by mediating the direct transfer of the sulfur atom from the S-sulfanylcysteine of SufS, an intermediate product of cysteine desulfuration process. The chain is Cysteine desulfuration protein SufE from Pectobacterium atrosepticum (strain SCRI 1043 / ATCC BAA-672) (Erwinia carotovora subsp. atroseptica).